The sequence spans 425 residues: Serine--tRNA ligase (425 aa).

230-232 lines the L-serine pocket; the sequence is TAE. 261–263 is an ATP binding site; sequence RSE. Glu-284 lines the L-serine pocket. 348 to 351 contributes to the ATP binding site; the sequence is EISS. An L-serine-binding site is contributed by Ser-384.

This sequence belongs to the class-II aminoacyl-tRNA synthetase family. Type-1 seryl-tRNA synthetase subfamily. Homodimer. The tRNA molecule binds across the dimer.

It localises to the cytoplasm. It catalyses the reaction tRNA(Ser) + L-serine + ATP = L-seryl-tRNA(Ser) + AMP + diphosphate + H(+). It carries out the reaction tRNA(Sec) + L-serine + ATP = L-seryl-tRNA(Sec) + AMP + diphosphate + H(+). Its pathway is aminoacyl-tRNA biosynthesis; selenocysteinyl-tRNA(Sec) biosynthesis; L-seryl-tRNA(Sec) from L-serine and tRNA(Sec): step 1/1. Functionally, catalyzes the attachment of serine to tRNA(Ser). Is also able to aminoacylate tRNA(Sec) with serine, to form the misacylated tRNA L-seryl-tRNA(Sec), which will be further converted into selenocysteinyl-tRNA(Sec). The polypeptide is Serine--tRNA ligase (Streptococcus gordonii (strain Challis / ATCC 35105 / BCRC 15272 / CH1 / DL1 / V288)).